The sequence spans 369 residues: Flagellar P-ring protein (369 aa).

The first 23 residues, 1–23 (MRSLLRWMGVLLLCGLCAAPAQA), serve as a signal peptide directing secretion.

The protein belongs to the FlgI family. The basal body constitutes a major portion of the flagellar organelle and consists of four rings (L,P,S, and M) mounted on a central rod.

The protein resides in the periplasm. It is found in the bacterial flagellum basal body. Functionally, assembles around the rod to form the L-ring and probably protects the motor/basal body from shearing forces during rotation. The polypeptide is Flagellar P-ring protein (Chromohalobacter salexigens (strain ATCC BAA-138 / DSM 3043 / CIP 106854 / NCIMB 13768 / 1H11)).